A 266-amino-acid chain; its full sequence is ATP synthase subunit a (266 aa).

7 helical membrane-spanning segments follow: residues 41 to 61 (IDTL…FWLA), 98 to 118 (VIAP…LMDL), 119 to 139 (VPID…WKIL), 152 to 172 (LSVL…GGWL), 178 to 198 (HPLG…EFIA), 216 to 236 (LVFI…GTPW), and 237 to 257 (AIFH…LTVV).

It belongs to the ATPase A chain family. In terms of assembly, F-type ATPases have 2 components, CF(1) - the catalytic core - and CF(0) - the membrane proton channel. CF(1) has five subunits: alpha(3), beta(3), gamma(1), delta(1), epsilon(1). CF(0) has three main subunits: a(1), b(2) and c(9-12). The alpha and beta chains form an alternating ring which encloses part of the gamma chain. CF(1) is attached to CF(0) by a central stalk formed by the gamma and epsilon chains, while a peripheral stalk is formed by the delta and b chains.

The protein resides in the cell inner membrane. Functionally, key component of the proton channel; it plays a direct role in the translocation of protons across the membrane. This chain is ATP synthase subunit a, found in Halorhodospira halophila (strain DSM 244 / SL1) (Ectothiorhodospira halophila (strain DSM 244 / SL1)).